Reading from the N-terminus, the 184-residue chain is MSPMLQIAAEEMENPLIPPIPELVIGLIAFVIVFGFLAKKLLPNINKVLEERREAIEGGIEKAEAAQTEAQSVLEQYKAQLAEARHEAARLRQEAQEQGATLIAEMRAEGQRQREEIIAAGHAQIQADRKAAASALRQDVGKLATELAGKLVGESLEDHARQSRVIDRFLDELDDKATTAEATR.

The chain crosses the membrane as a helical span at residues 16-36; sequence LIPPIPELVIGLIAFVIVFGF.

The protein belongs to the ATPase B chain family. As to quaternary structure, F-type ATPases have 2 components, F(1) - the catalytic core - and F(0) - the membrane proton channel. F(1) has five subunits: alpha(3), beta(3), gamma(1), delta(1), epsilon(1). F(0) has three main subunits: a(1), b(2) and c(10-14). The alpha and beta chains form an alternating ring which encloses part of the gamma chain. F(1) is attached to F(0) by a central stalk formed by the gamma and epsilon chains, while a peripheral stalk is formed by the delta and b chains.

Its subcellular location is the cell membrane. F(1)F(0) ATP synthase produces ATP from ADP in the presence of a proton or sodium gradient. F-type ATPases consist of two structural domains, F(1) containing the extramembraneous catalytic core and F(0) containing the membrane proton channel, linked together by a central stalk and a peripheral stalk. During catalysis, ATP synthesis in the catalytic domain of F(1) is coupled via a rotary mechanism of the central stalk subunits to proton translocation. In terms of biological role, component of the F(0) channel, it forms part of the peripheral stalk, linking F(1) to F(0). The protein is ATP synthase subunit b of Streptomyces coelicolor (strain ATCC BAA-471 / A3(2) / M145).